Consider the following 2193-residue polypeptide: Genome polyprotein (2193 aa).

A disordered region spans residues 1-22 (MGSQVSTQRSGSHENSNSATEG). G2 carries N-myristoyl glycine; by host lipidation. Over 2–1503 (GSQVSTQRSG…HLNRAVLVMQ (1502 aa)) the chain is Cytoplasmic. Amphipathic alpha-helix stretches follow at residues 566–588 (GDRV…LTQA) and 568–588 (RVAD…LTQA). Residues H883 and D901 each act as for protease 2A activity in the active site. Residues C918 and C920 each coordinate Zn(2+). Catalysis depends on C972, which acts as the For protease 2A activity. Residues C978 and H980 each coordinate Zn(2+). A membrane-binding region spans residues 1112-1184 (SASWLKKFND…EQSAASQEDL (73 aa)). The oligomerization stretch occupies residues 1112–1250 (SASWLKKFND…SPGTGKSLAT (139 aa)). The tract at residues 1133 to 1137 (SNKIS) is RNA-binding. Positions 1216-1374 (EKRMNNYMQF…YKTDLGRLDA (159 aa)) constitute an SF3 helicase domain. Position 1240 to 1247 (1240 to 1247 (GSPGTGKS)) interacts with ATP. Positions 1381, 1392, 1393, and 1397 each coordinate Zn(2+). The C4-type; degenerate zinc finger occupies 1381–1397 (CSENNTANFKRCSPLVC). The tract at residues 1424-1431 (EYSNRSAI) is RNA-binding. Residues 1435–1440 (IEALFQ) are oligomerization. Residues 1504–1519 (SIATVVAVVSLVYVIY) lie within the membrane without spanning it. Residues 1520–2193 (KLFAGFQGAY…NLRRNWLELF (674 aa)) are Cytoplasmic-facing. Y1529 is subject to O-(5'-phospho-RNA)-tyrosine. The Peptidase C3 domain occupies 1549–1727 (GPSLDFALSL…FCAGLKRSYF (179 aa)). Catalysis depends on for protease 3C activity residues H1588, E1619, and C1695. The region spanning 1958 to 2073 (GSLFAFDYSG…ASYPFPIDCL (116 aa)) is the RdRp catalytic domain. Mg(2+) is bound by residues D1964 and D2060.

This sequence belongs to the picornaviruses polyprotein family. As to quaternary structure, interacts with capsid protein VP1 and capsid protein VP3 to form heterotrimeric protomers. Interacts with capsid protein VP0, and capsid protein VP3 to form heterotrimeric protomers. Five protomers subsequently associate to form pentamers which serve as building blocks for the capsid. Interacts with capsid protein VP2, capsid protein VP3 and capsid protein VP4 following cleavage of capsid protein VP0. Interacts with host SCARB2. Interacts with host ARF6; this interaction mediates viral endocytosis. In terms of assembly, interacts with capsid protein VP1 and capsid protein VP3 in the mature capsid. Interacts with host SCARB2. As to quaternary structure, interacts with capsid protein VP0 and capsid protein VP1 to form heterotrimeric protomers. Five protomers subsequently associate to form pentamers which serve as building blocks for the capsid. Interacts with capsid protein VP4 in the mature capsid. Interacts with protein 2C; this interaction may be important for virion morphogenesis. Interacts with capsid protein VP1 and capsid protein VP3. In terms of assembly, homodimer. As to quaternary structure, interacts with host BAX; this interaction activates the mitochondrial apoptotic pathway. Interacts with host ILF2. Homohexamer; forms a hexameric ring structure with 6-fold symmetry characteristic of AAA+ ATPases. Interacts (via N-terminus) with host RTN3 (via reticulon domain); this interaction is important for viral replication. Interacts with capsid protein VP3; this interaction may be important for virion morphogenesis. In terms of assembly, interacts with protein 3CD. As to quaternary structure, homodimer. Interacts with host GBF1. Interacts (via GOLD domain) with host ACBD3 (via GOLD domain); this interaction allows the formation of a viral protein 3A/ACBD3 heterotetramer with a 2:2 stoichiometry, which will stimulate the recruitment of host PI4KB in order to synthesize PI4P at the viral RNA replication sites. Interacts with RNA-directed RNA polymerase. In terms of assembly, interacts with host IFIH1/MDA5; this interaction inhibits host IFIH1. Interacts with host RIGI. As to quaternary structure, interacts with protein 3AB and with RNA-directed RNA polymerase. Interacts with Viral protein genome-linked and with protein 3CD. Requires Mg(2+) as cofactor. In terms of processing, specific enzymatic cleavages in vivo by the viral proteases yield processing intermediates and the mature proteins. Myristoylation is required for the formation of pentamers during virus assembly. Further assembly of 12 pentamers and a molecule of genomic RNA generates the provirion. Post-translationally, during virion maturation, immature virions are rendered infectious following cleavage of VP0 into VP4 and VP2. This maturation seems to be an autocatalytic event triggered by the presence of RNA in the capsid and it is followed by a conformational change infectious virion. In terms of processing, myristoylation is required during RNA encapsidation and formation of the mature virus particle. VPg is uridylylated by the polymerase into VPg-pUpU. This acts as a nucleotide-peptide primer for the genomic RNA replication.

The protein localises to the virion. It is found in the host cytoplasm. It localises to the host cytoplasmic vesicle membrane. Its subcellular location is the host nucleus. It catalyses the reaction a ribonucleoside 5'-triphosphate + H2O = a ribonucleoside 5'-diphosphate + phosphate + H(+). The enzyme catalyses Selective cleavage of Tyr-|-Gly bond in the picornavirus polyprotein.. It carries out the reaction RNA(n) + a ribonucleoside 5'-triphosphate = RNA(n+1) + diphosphate. The catalysed reaction is Selective cleavage of Gln-|-Gly bond in the poliovirus polyprotein. In other picornavirus reactions Glu may be substituted for Gln, and Ser or Thr for Gly.. Replication or transcription is subject to high level of random mutations by the nucleotide analog ribavirin. Functionally, forms an icosahedral capsid of pseudo T=3 symmetry with capsid proteins VP2 and VP3. The capsid is 300 Angstroms in diameter, composed of 60 copies of each capsid protein and enclosing the viral positive strand RNA genome. Capsid protein VP1 mainly forms the vertices of the capsid. Capsid protein VP1, together with VP2, interacts with host cell receptor SCARB2 to provide virion attachment to target host cells. This attachment induces virion internalization. This attachment induces virion internalization. After binding to its receptor, the capsid undergoes conformational changes. Capsid protein VP1 N-terminus (that contains an amphipathic alpha-helix) and capsid protein VP4 are externalized. Together, they shape a pore in the host membrane through which viral genome is translocated to host cell cytoplasm. Forms an icosahedral capsid of pseudo T=3 symmetry with capsid proteins VP2 and VP3. The capsid is 300 Angstroms in diameter, composed of 60 copies of each capsid protein and enclosing the viral positive strand RNA genome. Capsid protein VP2, together with VP1, interacts with host cell receptor SCARB2 to provide virion attachment to target host cells. Its function is as follows. Forms an icosahedral capsid of pseudo T=3 symmetry with capsid proteins VP2 and VP3. The capsid is 300 Angstroms in diameter, composed of 60 copies of each capsid protein and enclosing the viral positive strand RNA genome. In terms of biological role, lies on the inner surface of the capsid shell. After binding to the host receptor, the capsid undergoes conformational changes. Capsid protein VP4 is released, Capsid protein VP1 N-terminus is externalized, and together, they shape a pore in the host membrane through which the viral genome is translocated into the host cell cytoplasm. Functionally, component of immature procapsids, which is cleaved into capsid proteins VP4 and VP2 after maturation. Allows the capsid to remain inactive before the maturation step. Cysteine protease that cleaves viral polyprotein and specific host proteins. It is responsible for the autocatalytic cleavage between the P1 and P2 regions, which is the first cleavage occurring in the polyprotein. Also cleaves the host translation initiation factor EIF4G1, in order to shut down the capped cellular mRNA translation. Inhibits the host nucleus-cytoplasm protein and RNA trafficking by cleaving host members of the nuclear pores. Counteracts stress granule formation probably by antagonizing its assembly or promoting its dissassembly. Cleaves and inhibits host IFIH1/MDA5, thereby inhibiting the type-I IFN production and the establishment of the antiviral state. Cleaves and inhibits host MAVS, thereby inhibiting the type-I IFN production and the establishment of the antiviral state. Its function is as follows. Plays an essential role in the virus replication cycle by acting as a viroporin. Creates a pore in the host endoplasmic reticulum and as a consequence releases Ca2+ in the cytoplasm of infected cell. In turn, high levels of cytoplasmic calcium may trigger membrane trafficking and transport of viral ER-associated proteins to viroplasms, sites of viral genome replication. Also activates the mitochondrial apoptotic pathway by activating host BAX. In terms of biological role, induces and associates with structural rearrangements of intracellular membranes. Displays RNA-binding, nucleotide binding and NTPase activities. May play a role in virion morphogenesis and viral RNA encapsidation by interacting with the capsid protein VP3. Functionally, localizes the viral replication complex to the surface of membranous vesicles. Together with protein 3CD binds the Cis-Active RNA Element (CRE) which is involved in RNA synthesis initiation. Acts as a cofactor to stimulate the activity of 3D polymerase, maybe through a nucleid acid chaperone activity. Localizes the viral replication complex to the surface of membranous vesicles. It inhibits host cell endoplasmic reticulum-to-Golgi apparatus transport and causes the disassembly of the Golgi complex, possibly through GBF1 interaction. This would result in depletion of MHC, trail receptors and IFN receptors at the host cell surface. Plays an essential role in viral RNA replication by recruiting ACBD3 and PI4KB at the viral replication sites, thereby allowing the formation of the rearranged membranous structures where viral replication takes place. Its function is as follows. Acts as a primer for viral RNA replication and remains covalently bound to viral genomic RNA. VPg is uridylylated prior to priming replication into VPg-pUpU. The oriI viral genomic sequence may act as a template for this. The VPg-pUpU is then used as primer on the genomic RNA poly(A) by the RNA-dependent RNA polymerase to replicate the viral genome. During genome replication, the VPg-RNA linkage is removed by the host TDP2, thereby accelerating replication. During the late stage of the replication cycle, host TDP2 is excluded from sites of viral RNA synthesis and encapsidation, allowing for the generation of progeny virions. In terms of biological role, involved in the viral replication complex and viral polypeptide maturation. It exhibits protease activity with a specificity and catalytic efficiency that is different from protease 3C. Protein 3CD lacks polymerase activity. Protein 3CD binds to the 5'UTR of the viral genome. Functionally, major viral protease that mediates proteolytic processing of the polyprotein. Cleaves host EIF5B, contributing to host translation shutoff. Also cleaves host PABPC1, contributing to host translation shutoff. Disassembles host cytoplasmic stress granules by cleaving host G3BP1, although this effect is less prononced than the inhibition induced by protease 2A. Cleaves host RIGI and thus contributes to the inhibition of type I interferon production. Cleaves host IRF7 and thus contributes to the inhibition of type I interferon production. Cleaves host HNRNPA1 thereby increasing the translation of apoptosis protease activating factor APAF1, leading to apoptosis of the host cell. Cleaves host NLRP1, triggers host N-glycine-mediated degradation of the autoinhibitory NLRP1 N-terminal fragment. Replicates the viral genomic RNA on the surface of intracellular membranes. May form linear arrays of subunits that propagate along a strong head-to-tail interaction called interface-I. Covalently attaches UMP to a tyrosine of VPg, which is used to prime RNA synthesis. The positive stranded RNA genome is first replicated at virus induced membranous vesicles, creating a dsRNA genomic replication form. This dsRNA is then used as template to synthesize positive stranded RNA genomes. ss(+)RNA genomes are either translated, replicated or encapsidated. The protein is Genome polyprotein of Homo sapiens (Human).